The primary structure comprises 273 residues: Proteasome subunit beta (273 aa).

Positions 1-19 are enriched in polar residues; sequence MQESTANKVAANATSSFTE. The interval 1 to 23 is disordered; that stretch reads MQESTANKVAANATSSFTEHLQR. Residues 1 to 50 constitute a propeptide, removed in mature form; by autocatalysis; that stretch reads MQESTANKVAANATSSFTEHLQRDRPELLPFNRSGQGSATAAAPLQVPHA. Threonine 51 (nucleophile) is an active-site residue.

The protein belongs to the peptidase T1B family. In terms of assembly, the 20S proteasome core is composed of 14 alpha and 14 beta subunits that assemble into four stacked heptameric rings, resulting in a barrel-shaped structure. The two inner rings, each composed of seven catalytic beta subunits, are sandwiched by two outer rings, each composed of seven alpha subunits. The catalytic chamber with the active sites is on the inside of the barrel. Has a gated structure, the ends of the cylinder being occluded by the N-termini of the alpha-subunits. Is capped by the proteasome-associated ATPase, ARC.

The protein localises to the cytoplasm. It carries out the reaction Cleavage of peptide bonds with very broad specificity.. Its pathway is protein degradation; proteasomal Pup-dependent pathway. The formation of the proteasomal ATPase ARC-20S proteasome complex, likely via the docking of the C-termini of ARC into the intersubunit pockets in the alpha-rings, may trigger opening of the gate for substrate entry. Interconversion between the open-gate and close-gate conformations leads to a dynamic regulation of the 20S proteasome proteolysis activity. In terms of biological role, component of the proteasome core, a large protease complex with broad specificity involved in protein degradation. The chain is Proteasome subunit beta from Pseudarthrobacter chlorophenolicus (strain ATCC 700700 / DSM 12829 / CIP 107037 / JCM 12360 / KCTC 9906 / NCIMB 13794 / A6) (Arthrobacter chlorophenolicus).